Consider the following 416-residue polypeptide: Adenylosuccinate synthetase (416 aa).

GTP is bound by residues 11-17 (GDEGKGK) and 39-41 (GHT). The active-site Proton acceptor is Asp-12. 2 residues coordinate Mg(2+): Asp-12 and Gly-39. IMP-binding positions include 12 to 15 (DEGK), 37 to 40 (NAGH), Thr-125, Arg-139, Gln-214, Thr-229, and Arg-290. His-40 serves as the catalytic Proton donor. 286–292 (TTTGRPR) lines the substrate pocket. Residues Arg-292, 318-320 (KLD), and 405-407 (SLG) each bind GTP.

This sequence belongs to the adenylosuccinate synthetase family. As to quaternary structure, homodimer. Mg(2+) serves as cofactor.

The protein localises to the cytoplasm. The enzyme catalyses IMP + L-aspartate + GTP = N(6)-(1,2-dicarboxyethyl)-AMP + GDP + phosphate + 2 H(+). It functions in the pathway purine metabolism; AMP biosynthesis via de novo pathway; AMP from IMP: step 1/2. Plays an important role in the de novo pathway of purine nucleotide biosynthesis. Catalyzes the first committed step in the biosynthesis of AMP from IMP. This Picrophilus torridus (strain ATCC 700027 / DSM 9790 / JCM 10055 / NBRC 100828 / KAW 2/3) protein is Adenylosuccinate synthetase.